The chain runs to 159 residues: 2-C-methyl-D-erythritol 2,4-cyclodiphosphate synthase (159 aa).

The a divalent metal cation site is built by aspartate 10 and histidine 12. 4-CDP-2-C-methyl-D-erythritol 2-phosphate-binding positions include 10-12 (DVH) and 36-37 (HS). Histidine 44 provides a ligand contact to a divalent metal cation. 4-CDP-2-C-methyl-D-erythritol 2-phosphate is bound by residues 58–60 (DIG), 134–137 (TTTE), phenylalanine 141, and arginine 144.

Belongs to the IspF family. As to quaternary structure, homotrimer. Requires a divalent metal cation as cofactor.

The enzyme catalyses 4-CDP-2-C-methyl-D-erythritol 2-phosphate = 2-C-methyl-D-erythritol 2,4-cyclic diphosphate + CMP. The protein operates within isoprenoid biosynthesis; isopentenyl diphosphate biosynthesis via DXP pathway; isopentenyl diphosphate from 1-deoxy-D-xylulose 5-phosphate: step 4/6. In terms of biological role, involved in the biosynthesis of isopentenyl diphosphate (IPP) and dimethylallyl diphosphate (DMAPP), two major building blocks of isoprenoid compounds. Catalyzes the conversion of 4-diphosphocytidyl-2-C-methyl-D-erythritol 2-phosphate (CDP-ME2P) to 2-C-methyl-D-erythritol 2,4-cyclodiphosphate (ME-CPP) with a corresponding release of cytidine 5-monophosphate (CMP). The protein is 2-C-methyl-D-erythritol 2,4-cyclodiphosphate synthase of Bacteroides fragilis (strain YCH46).